Consider the following 278-residue polypeptide: Complement C1q tumor necrosis factor-related protein 6 (278 aa).

The signal sequence occupies residues 1-46; sequence MQWLRVRESPGEATGHRVTMGTAALGPVWAALLLFLLMCEIPMVEL. A glycan (N-linked (GlcNAc...) asparagine) is linked at asparagine 91. The region spanning 97–138 is the Collagen-like domain; the sequence is GDKGDPGPMGLPGYMGREGPQGEPGPQGSKGDKGEMGSPGAP. Residues 99-135 form a disordered region; the sequence is KGDPGPMGLPGYMGREGPQGEPGPQGSKGDKGEMGSP. Positions 139 to 259 constitute a C1q domain; that stretch reads CQKRFFAFSV…KRQRENAIYS (121 aa).

The protein localises to the secreted. This is Complement C1q tumor necrosis factor-related protein 6 (C1QTNF6) from Homo sapiens (Human).